The sequence spans 321 residues: Transcription factor ATOH8 (321 aa).

Disordered regions lie at residues 59–193 (GLRD…SSYS) and 203–222 (HQDSSASPRKRPGEATAASS). Residues 70 to 85 (VPVPVPVPVPVAPAVP) are compositionally biased toward pro residues. Residues 93–109 (AGERGGSRAPEVSDARK) show a composition bias toward basic and acidic residues. Residues 121–132 (LPTPPPPPPPAP) show a composition bias toward pro residues. Positions 133–143 (QSQAPGGPEAQ) are enriched in low complexity. Positions 160–186 (PARPAPSAPPAPPAPPESTVRPAPPTR) are enriched in pro residues. The basic motif; degenerate stretch occupies residues 230 to 243 (TRRLLANARERTRV). Positions 230–282 (TRRLLANARERTRVHTISAAFEALRKQVPCYSYGQKLSKLAILRIACNYILSL) constitute a bHLH domain. The helix-loop-helix motif stretch occupies residues 244–282 (HTISAAFEALRKQVPCYSYGQKLSKLAILRIACNYILSL).

In terms of assembly, efficient DNA binding requires dimerization with another bHLH protein. Interacts with NEUROG3 and NEUROD1. Interacts with ZFPM2; mediates indirect interaction with GATA4. Forms a heterodimer with TCF3; repress transcription of TCF3 and TCF3/NEUROG3 dimer-induced transactivation of E box-dependent promoters. Expressed in lung, liver, kidney, heart and pancreas. Expressed in endothel of umbilical vessels.

The protein localises to the nucleus. Its subcellular location is the nucleus speckle. It localises to the cytoplasm. Functionally, transcription factor that binds a palindromic (canonical) core consensus DNA sequence 5'-CANNTG- 3' known as an E-box element, possibly as a heterodimer with other bHLH proteins. Regulates endothelial cell proliferation, migration and tube-like structures formation. Modulates endothelial cell differentiation through NOS3. May be implicated in specification and differentiation of neuronal cell lineages in the brain. May participate in kidney development and may be involved in podocyte differentiation. During early embryonic development is involved in tissue-specific differentiation processes that are dependent on class II bHLH factors and namely modulates the differentiation program initiated by the pro-endocrine factor NEUROG3. During myogenesis, may play a role during the transition of myoblasts from the proliferative phase to the differentiation phase. Positively regulates HAMP transcription in two ways, firstly by acting directly on the HAMP promoter via E-boxes binding and indirectly through increased phosphorylation of SMAD protein complex. Repress NEUROG3-dependent gene activation in a gene-specific manner through at least two mechanisms; requires only either the sequestering of a general partner such as TCF3 through heterodimerization, either also requires binding of the bHLH domain to DNA via a basic motif. This chain is Transcription factor ATOH8, found in Homo sapiens (Human).